The primary structure comprises 86 residues: Small ribosomal subunit protein uS17 (86 aa).

This sequence belongs to the universal ribosomal protein uS17 family. As to quaternary structure, part of the 30S ribosomal subunit.

Its function is as follows. One of the primary rRNA binding proteins, it binds specifically to the 5'-end of 16S ribosomal RNA. The protein is Small ribosomal subunit protein uS17 of Streptococcus pyogenes serotype M6 (strain ATCC BAA-946 / MGAS10394).